A 604-amino-acid polypeptide reads, in one-letter code: Vacuolar protein sorting-associated protein 64 (604 aa).

The interval 1-89 is disordered; sequence MVELEKRRRP…SVHQVSQQQQ (89 aa). Topologically, residues 1-578 are cytoplasmic; the sequence is MVELEKRRRP…LGVVEGKRTR (578 aa). The span at 22–34 shows a compositional bias: polar residues; that stretch reads DQSNSQGMTKTPE. Composition is skewed to low complexity over residues 44 to 57 and 77 to 89; these read RARS…SRSN and SPPS…QQQQ. Positions 185–257 constitute an FHA domain; sequence LKLGRPVTNS…NGTFVNGVKI (73 aa). Positions 404 to 563 form a coiled coil; sequence NLINMIKTLT…EEKKDTEDTL (160 aa). The disordered stretch occupies residues 539-561; sequence INNDNNAKVKQNDSREEKKDTED. The span at 548 to 560 shows a compositional bias: basic and acidic residues; it reads KQNDSREEKKDTE. The chain crosses the membrane as a helical; Anchor for type IV membrane protein span at residues 579 to 598; that stretch reads VSKGMLFGVVAISFGLVATA. The Lumenal segment spans residues 599–604; sequence VKQLPQ.

As to quaternary structure, component of a complex at least composed of FAR3, FAR7, FAR8, FAR10, FAR11 and VPS64.

It is found in the endoplasmic reticulum membrane. Its function is as follows. Participates in the control of the reentry into the cell cycle following pheromone treatment. Involved in vacuolar protein sorting. In Saccharomyces cerevisiae (strain ATCC 204508 / S288c) (Baker's yeast), this protein is Vacuolar protein sorting-associated protein 64 (VPS64).